Consider the following 468-residue polypeptide: Neuronal acetylcholine receptor subunit alpha-5 (468 aa).

Positions 1-22 are cleaved as a signal peptide; it reads MATRGSGPRAPRLLLLVQLVAG. The Extracellular segment spans residues 23–254; it reads RCGLAGAAGG…VIKRLPLFYT (232 aa). Asparagine 155, asparagine 183, and asparagine 229 each carry an N-linked (GlcNAc...) asparagine glycan. A disulfide bridge links cysteine 170 with cysteine 184. Cysteine 234 and cysteine 235 are disulfide-bonded. A run of 3 helical transmembrane segments spans residues 255–275, 282–302, and 317–337; these read LFLI…FYLP, ICLC…IEEI, and LVFT…AINI. Residues 338–429 lie on the Cytoplasmic side of the membrane; it reads HHRSSSTHNA…WKFIAQVLDR (92 aa). A helical membrane pass occupies residues 430-451; it reads MFLWTFLFVSIVGSLGLFVPVI. Residues 452–468 are Extracellular-facing; it reads YKWANILIPVHIGNANK.

Belongs to the ligand-gated ion channel (TC 1.A.9) family. Acetylcholine receptor (TC 1.A.9.1) subfamily. Alpha-5/CHRNA5 sub-subfamily. As to quaternary structure, neuronal AChR that forms heteropentamers composed of two different type of subunits: alpha and non-alpha (beta). CHRNA5/alpha-5 subunit is only able to form functional nAChRs when co-assembled with another alpha subunit, can be combined to CHRNA4/alpha-4 or CHRNA3/alpha-3 and CHRNB4/beta-4 or CHRNB2/beta-2 to give rise to functional receptors. Interacts with LYPD6.

The protein resides in the synaptic cell membrane. It is found in the cell membrane. The enzyme catalyses Ca(2+)(in) = Ca(2+)(out). The catalysed reaction is K(+)(in) = K(+)(out). It carries out the reaction Na(+)(in) = Na(+)(out). Its activity is regulated as follows. Activated by a myriad of ligands such as acetylcholine, cytisine, nicotine, choline and epibatidine. Functionally, component of neuronal acetylcholine receptors (nAChRs) that function as pentameric, ligand-gated cation channels with high calcium permeability among other activities. nAChRs are excitatory neurotrasnmitter receptors formed by a collection of nAChR subunits known to mediate synaptic transmission in the nervous system and the neuromuscular junction. Each nAchR subunit confers differential attributes to channel properties, including activation, deactivation and desensitization kinetics, pH sensitivity, cation permeability, and binding to allosteric modulators. Has an accessory rather than functional role and is only able to form functional nAChRs when co-assembled with another beta subunit. Participates in pentameric assemblies along with CHRNA3, CHRNA4, CHRNB2 and CHRNB4. Increases receptor sensitivity to acetylcholine and nicotine when associated with CHRNA4 and CHRNB2. Plays a role in nicotine addiction. This chain is Neuronal acetylcholine receptor subunit alpha-5 (CHRNA5), found in Pan troglodytes (Chimpanzee).